Consider the following 322-residue polypeptide: N-acetyl-gamma-glutamyl-phosphate reductase (322 aa).

The active site involves Cys132.

This sequence belongs to the NAGSA dehydrogenase family. Type 1 subfamily.

It is found in the cytoplasm. The enzyme catalyses N-acetyl-L-glutamate 5-semialdehyde + phosphate + NADP(+) = N-acetyl-L-glutamyl 5-phosphate + NADPH + H(+). Its pathway is amino-acid biosynthesis; L-arginine biosynthesis; N(2)-acetyl-L-ornithine from L-glutamate: step 3/4. In terms of biological role, catalyzes the NADPH-dependent reduction of N-acetyl-5-glutamyl phosphate to yield N-acetyl-L-glutamate 5-semialdehyde. The polypeptide is N-acetyl-gamma-glutamyl-phosphate reductase (Bacteroides fragilis (strain ATCC 25285 / DSM 2151 / CCUG 4856 / JCM 11019 / LMG 10263 / NCTC 9343 / Onslow / VPI 2553 / EN-2)).